Consider the following 389-residue polypeptide: Chitinase-3-like protein 1 (389 aa).

The N-terminal stretch at 1-29 is a signal peptide; it reads MHTSTEARMGMRAALTGFAVLMLLQSCSA. Residues 30-389 enclose the GH18 domain; that stretch reads YKLVCYFTSW…LTNAIKDALA (360 aa). Cys-34 and Cys-59 are disulfide-bonded. N-linked (GlcNAc...) asparagine glycosylation is present at Asn-68. Chitin contacts are provided by residues 79–80, 106–109, Tyr-150, and 213–216; these read EW, GGWK, and MTYD. Cys-309 and Cys-372 form a disulfide bridge. Residues 333–347 form an important for AKT1 activation and IL8 production region; that stretch reads QWVGYEDKESVKNKV. Trp-361 is a binding site for chitin.

This sequence belongs to the glycosyl hydrolase 18 family. In terms of assembly, monomer. As to expression, detected in lung in pulmonary macrophages and alveolar type 2 cells and in bronchoalveolar lavage (BAL) fluids. Expressed in mammary tumor cells (at protein level). Expressed in lung. Not detected in non-inflammatory colon.

It is found in the secreted. It localises to the extracellular space. Its subcellular location is the cytoplasm. The protein resides in the endoplasmic reticulum. Its function is as follows. Carbohydrate-binding lectin with a preference for chitin. Has no chitinase activity. May play a role in tissue remodeling and in the capacity of cells to respond to and cope with changes in their environment. Plays a role in T-helper cell type 2 (Th2) inflammatory response and IL-13-induced inflammation, regulating allergen sensitization, inflammatory cell apoptosis, dendritic cell accumulation and M2 macrophage differentiation. Facilitates invasion of pathogenic enteric bacteria into colonic mucosa and lymphoid organs. Mediates activation of AKT1 signaling pathway and subsequent IL8 production in colonic epithelial cells. Regulates antibacterial responses in lung by contributing to macrophage bacterial killing, controlling bacterial dissemination and augmenting host tolerance. Also regulates hyperoxia-induced injury, inflammation and epithelial apoptosis in lung. This is Chitinase-3-like protein 1 (Chi3l1) from Mus musculus (Mouse).